Consider the following 467-residue polypeptide: Inactive pancreatic lipase-related protein 1 (467 aa).

Residues 1–17 form the signal peptide; that stretch reads MVSIWTIALFLLGAAKA. 2 cysteine pairs are disulfide-bonded: cysteine 21–cysteine 27 and cysteine 109–cysteine 120. The N-linked (GlcNAc...) asparagine glycan is linked to asparagine 157. Serine 171 (nucleophile) is an active-site residue. Aspartate 194 serves as the catalytic Charge relay system. Ca(2+) contacts are provided by glutamate 205, arginine 208, aspartate 210, and aspartate 213. A disulfide bridge links cysteine 255 with cysteine 279. The Charge relay system role is filled by histidine 281. 3 cysteine pairs are disulfide-bonded: cysteine 303/cysteine 314, cysteine 317/cysteine 322, and cysteine 451/cysteine 467. The PLAT domain occupies 356-467; the sequence is WRYGVSITLS…EDVLLTLTPC (112 aa).

The protein belongs to the AB hydrolase superfamily. Lipase family. In terms of tissue distribution, detected in pancreas (at protein level).

The protein resides in the secreted. Its function is as follows. May function as inhibitor of dietary triglyceride digestion. Lacks detectable lipase activity towards triglycerides, diglycerides, phosphatidylcholine, galactolipids or cholesterol esters (in vitro). In Canis lupus familiaris (Dog), this protein is Inactive pancreatic lipase-related protein 1 (PNLIPRP1).